The following is a 315-amino-acid chain: Ribosomal RNA small subunit methyltransferase H (315 aa).

S-adenosyl-L-methionine-binding positions include 33 to 35 (AGH), D53, F80, D101, and Q108.

This sequence belongs to the methyltransferase superfamily. RsmH family.

Its subcellular location is the cytoplasm. It catalyses the reaction cytidine(1402) in 16S rRNA + S-adenosyl-L-methionine = N(4)-methylcytidine(1402) in 16S rRNA + S-adenosyl-L-homocysteine + H(+). Its function is as follows. Specifically methylates the N4 position of cytidine in position 1402 (C1402) of 16S rRNA. The sequence is that of Ribosomal RNA small subunit methyltransferase H from Natranaerobius thermophilus (strain ATCC BAA-1301 / DSM 18059 / JW/NM-WN-LF).